The chain runs to 361 residues: tRNA-specific 2-thiouridylase MnmA (361 aa).

ATP is bound by residues 6–13 and I32; that span reads LVSGGVDS. The interval 93–95 is interaction with target base in tRNA; sequence NPD. The active-site Nucleophile is C98. C98 and C193 form a disulfide bridge. G121 lines the ATP pocket. The tract at residues 143 to 145 is interaction with tRNA; sequence KDQ. C193 functions as the Cysteine persulfide intermediate in the catalytic mechanism.

The protein belongs to the MnmA/TRMU family.

The protein localises to the cytoplasm. It catalyses the reaction S-sulfanyl-L-cysteinyl-[protein] + uridine(34) in tRNA + AH2 + ATP = 2-thiouridine(34) in tRNA + L-cysteinyl-[protein] + A + AMP + diphosphate + H(+). Functionally, catalyzes the 2-thiolation of uridine at the wobble position (U34) of tRNA, leading to the formation of s(2)U34. The polypeptide is tRNA-specific 2-thiouridylase MnmA (Porphyromonas gingivalis (strain ATCC 33277 / DSM 20709 / CIP 103683 / JCM 12257 / NCTC 11834 / 2561)).